Reading from the N-terminus, the 135-residue chain is MSLRTLVLLKPDAVRRGLVGAILSRYEAKGLTIVAMEQRTIDAAVADQHYAEHVAKEFYPPLRDFVTGGPLVALVLEGDNSVDVVRLLNGATDGSKAAPGTIRGDFSLSNRENLVHGSDSPESAEREIGIWFPGL.

Positions 10, 58, 86, 92, 103, and 113 each coordinate ATP. H116 functions as the Pros-phosphohistidine intermediate in the catalytic mechanism.

It belongs to the NDK family. As to quaternary structure, homotetramer. Mg(2+) is required as a cofactor.

It localises to the cytoplasm. The catalysed reaction is a 2'-deoxyribonucleoside 5'-diphosphate + ATP = a 2'-deoxyribonucleoside 5'-triphosphate + ADP. The enzyme catalyses a ribonucleoside 5'-diphosphate + ATP = a ribonucleoside 5'-triphosphate + ADP. In terms of biological role, major role in the synthesis of nucleoside triphosphates other than ATP. The ATP gamma phosphate is transferred to the NDP beta phosphate via a ping-pong mechanism, using a phosphorylated active-site intermediate. This chain is Nucleoside diphosphate kinase, found in Nocardioides sp. (strain ATCC BAA-499 / JS614).